A 184-amino-acid polypeptide reads, in one-letter code: ATP synthase subunit b, chloroplastic (184 aa).

Residues 27 to 49 form a helical membrane-spanning segment; the sequence is LATNPINLSVVLGVLIFFGKGVL.

Belongs to the ATPase B chain family. F-type ATPases have 2 components, F(1) - the catalytic core - and F(0) - the membrane proton channel. F(1) has five subunits: alpha(3), beta(3), gamma(1), delta(1), epsilon(1). F(0) has four main subunits: a(1), b(1), b'(1) and c(10-14). The alpha and beta chains form an alternating ring which encloses part of the gamma chain. F(1) is attached to F(0) by a central stalk formed by the gamma and epsilon chains, while a peripheral stalk is formed by the delta, b and b' chains.

It localises to the plastid. Its subcellular location is the chloroplast thylakoid membrane. Functionally, f(1)F(0) ATP synthase produces ATP from ADP in the presence of a proton or sodium gradient. F-type ATPases consist of two structural domains, F(1) containing the extramembraneous catalytic core and F(0) containing the membrane proton channel, linked together by a central stalk and a peripheral stalk. During catalysis, ATP synthesis in the catalytic domain of F(1) is coupled via a rotary mechanism of the central stalk subunits to proton translocation. Its function is as follows. Component of the F(0) channel, it forms part of the peripheral stalk, linking F(1) to F(0). The chain is ATP synthase subunit b, chloroplastic from Platanus occidentalis (Sycamore).